We begin with the raw amino-acid sequence, 82 residues long: Small ribosomal subunit protein uS17 (82 aa).

Belongs to the universal ribosomal protein uS17 family. In terms of assembly, part of the 30S ribosomal subunit.

Its function is as follows. One of the primary rRNA binding proteins, it binds specifically to the 5'-end of 16S ribosomal RNA. This Paracoccus denitrificans (strain Pd 1222) protein is Small ribosomal subunit protein uS17.